Consider the following 258-residue polypeptide: Regulatory protein RecX (258 aa).

Belongs to the RecX family.

The protein resides in the cytoplasm. Its function is as follows. Modulates RecA activity. The protein is Regulatory protein RecX of Streptococcus uberis (strain ATCC BAA-854 / 0140J).